We begin with the raw amino-acid sequence, 534 residues long: Prolyl 4-hydroxylase subunit alpha-2 (534 aa).

Residues 1-21 form the signal peptide; sequence MKPWLCLVFFTSAFLIWHAEA. N-linked (GlcNAc...) asparagine glycosylation is present at Asn-115. The stretch at 207-240 is one TPR repeat; the sequence is VEILDYLSYAVFQFGDLHRAMELTRRLISLDSTH. Residue Asn-263 is glycosylated (N-linked (GlcNAc...) asparagine). Residues 413–519 form the Fe2OG dioxygenase domain; it reads TAELLQVANY…KWVSNKWFHE (107 aa). 3 residues coordinate Fe cation: His-431, Asp-433, and His-500. Lys-510 serves as a coordination point for 2-oxoglutarate.

Belongs to the P4HA family. In terms of assembly, heterotetramer of two alpha-2 chains and two beta chains (the beta chain is the multi-functional PDI). Requires Fe(2+) as cofactor. L-ascorbate is required as a cofactor.

It localises to the endoplasmic reticulum lumen. The catalysed reaction is L-prolyl-[collagen] + 2-oxoglutarate + O2 = trans-4-hydroxy-L-prolyl-[collagen] + succinate + CO2. Its function is as follows. Catalyzes the post-translational formation of 4-hydroxyproline in -Xaa-Pro-Gly- sequences in collagens and other proteins. The protein is Prolyl 4-hydroxylase subunit alpha-2 (P4HA2) of Gallus gallus (Chicken).